We begin with the raw amino-acid sequence, 134 residues long: Putative nickel-responsive regulator (134 aa).

Positions 78, 89, 91, and 97 each coordinate Ni(2+).

The protein belongs to the transcriptional regulatory CopG/NikR family. Ni(2+) is required as a cofactor.

In terms of biological role, transcriptional regulator. This Chlorobaculum tepidum (strain ATCC 49652 / DSM 12025 / NBRC 103806 / TLS) (Chlorobium tepidum) protein is Putative nickel-responsive regulator.